The primary structure comprises 390 residues: MAVGIENTIEEARFVEQARNFDIQRVIVKIGSSLLTNNGRGLDRTAIYEWAKQIAKLHKQGIEVLLVSSGAVAEGVVRMNLEERPKKLAALQACASIGQMGLIETWWSALIQHGIQSSQLLLTHDDLSNRSRYLNTTGALTQLLEWRVLPVINENDTITIDEIKFGDNDTLGAMAAAMVNADLYIILTDQEGVFTDNPRDNPNAKMIRQERAMADYLFDIAGDGGKLGRGGMLTKIRAGRLAAMGGCPTVIVSGAIDDVITRVVSGEAVGTLLTTNDQDKIIARKQWLAAHLRMSGSLIVDAGAAKAVVEHQKSLLPVGVSEVRGDFDEGDVVEIVHQDTGERIAVGQVNFSSRDACRVARERTEQFDRILGNNEERVVMVHRDNLALTM.

Lys29 lines the ATP pocket. Positions 69, 156, and 168 each coordinate substrate. ATP is bound at residue 188–189 (TD). One can recognise a PUA domain in the interval 295 to 374 (SGSLIVDAGA…EQFDRILGNN (80 aa)).

Belongs to the glutamate 5-kinase family.

It localises to the cytoplasm. It carries out the reaction L-glutamate + ATP = L-glutamyl 5-phosphate + ADP. Its pathway is amino-acid biosynthesis; L-proline biosynthesis; L-glutamate 5-semialdehyde from L-glutamate: step 1/2. In terms of biological role, catalyzes the transfer of a phosphate group to glutamate to form L-glutamate 5-phosphate. This chain is Glutamate 5-kinase, found in Psychrobacter arcticus (strain DSM 17307 / VKM B-2377 / 273-4).